Consider the following 399-residue polypeptide: Fructose-1,6-bisphosphate aldolase/phosphatase (399 aa).

Asp11 acts as the Proton acceptor; for FBP phosphatase activity in catalysis. Mg(2+)-binding residues include Asp11, His18, Asp52, and Asp53. His18 is a beta-D-fructose 1,6-bisphosphate binding site. Position 18 (His18) interacts with dihydroxyacetone phosphate. Tyr91 is a binding site for beta-D-fructose 1,6-bisphosphate. Gln95 is a binding site for Mg(2+). Residue 104–105 (GN) participates in beta-D-fructose 1,6-bisphosphate binding. Asp132 contributes to the Mg(2+) binding site. Beta-D-fructose 1,6-bisphosphate is bound at residue Lys133. Lys133 is a dihydroxyacetone phosphate binding site. The Proton donor/acceptor; for FBP aldolase activity role is filled by Tyr229. Mg(2+) is bound by residues Lys232, Asp233, and Asp234. Residue Lys232 is the Schiff-base intermediate with DHAP; for FBP aldolase activity of the active site. Residues 242–243 (QS), Arg266, Asp297, and Tyr358 each bind beta-D-fructose 1,6-bisphosphate. Dihydroxyacetone phosphate contacts are provided by Arg266 and Asp297.

The protein belongs to the FBP aldolase/phosphatase family. As to quaternary structure, homooctamer; dimer of tetramers. Requires Mg(2+) as cofactor.

The enzyme catalyses beta-D-fructose 1,6-bisphosphate + H2O = beta-D-fructose 6-phosphate + phosphate. It carries out the reaction beta-D-fructose 1,6-bisphosphate = D-glyceraldehyde 3-phosphate + dihydroxyacetone phosphate. It functions in the pathway carbohydrate biosynthesis; gluconeogenesis. Functionally, catalyzes two subsequent steps in gluconeogenesis: the aldol condensation of dihydroxyacetone phosphate (DHAP) and glyceraldehyde-3-phosphate (GA3P) to fructose-1,6-bisphosphate (FBP), and the dephosphorylation of FBP to fructose-6-phosphate (F6P). The protein is Fructose-1,6-bisphosphate aldolase/phosphatase of Pyrobaculum neutrophilum (strain DSM 2338 / JCM 9278 / NBRC 100436 / V24Sta) (Thermoproteus neutrophilus).